Reading from the N-terminus, the 132-residue chain is D-ribose pyranase (132 aa).

The Proton donor role is filled by histidine 20. Substrate is bound by residues aspartate 28, histidine 99, and 121 to 123 (YSN).

Belongs to the RbsD / FucU family. RbsD subfamily. Homodecamer.

It is found in the cytoplasm. The catalysed reaction is beta-D-ribopyranose = beta-D-ribofuranose. Its pathway is carbohydrate metabolism; D-ribose degradation; D-ribose 5-phosphate from beta-D-ribopyranose: step 1/2. Catalyzes the interconversion of beta-pyran and beta-furan forms of D-ribose. In Streptococcus agalactiae serotype V (strain ATCC BAA-611 / 2603 V/R), this protein is D-ribose pyranase.